The sequence spans 310 residues: ADP-L-glycero-D-manno-heptose-6-epimerase (310 aa).

NADP(+) is bound by residues 10 to 11 (FI), 31 to 32 (DN), lysine 38, lysine 53, 75 to 79 (EGACS), and asparagine 92. Tyrosine 140 serves as the catalytic Proton acceptor. Lysine 144 serves as a coordination point for NADP(+). Asparagine 169 serves as a coordination point for substrate. Residues valine 170 and lysine 178 each coordinate NADP(+). Catalysis depends on lysine 178, which acts as the Proton acceptor. Residues serine 180, histidine 187, 201-204 (FEGS), and arginine 209 each bind substrate. An N6-acetyllysine modification is found at lysine 267. Residue tyrosine 272 coordinates substrate.

This sequence belongs to the NAD(P)-dependent epimerase/dehydratase family. HldD subfamily. Homopentamer. NADP(+) serves as cofactor. The cofactor is NAD(+).

It carries out the reaction ADP-D-glycero-beta-D-manno-heptose = ADP-L-glycero-beta-D-manno-heptose. It participates in nucleotide-sugar biosynthesis; ADP-L-glycero-beta-D-manno-heptose biosynthesis; ADP-L-glycero-beta-D-manno-heptose from D-glycero-beta-D-manno-heptose 7-phosphate: step 4/4. Its pathway is bacterial outer membrane biogenesis; LPS core biosynthesis. Completely inhibited by ADP and ADP-glucose, and partially inhibited by ATP and NADH. In terms of biological role, catalyzes the interconversion between ADP-D-glycero-beta-D-manno-heptose and ADP-L-glycero-beta-D-manno-heptose via an epimerization at carbon 6 of the heptose. This chain is ADP-L-glycero-D-manno-heptose-6-epimerase (hldD), found in Escherichia coli (strain K12).